Reading from the N-terminus, the 412-residue chain is Adipocyte plasma membrane-associated protein (412 aa).

Positions 1 to 32 (MTEADGLRQRRPLRPQVVTDDNRTPEAKGGSS) are disordered. Over 1–39 (MTEADGLRQRRPLRPQVVTDDNRTPEAKGGSSFSGRVFR) the chain is Cytoplasmic. Phosphothreonine is present on T19. Residues 40–60 (ATFLMLAAFLTIPLLGALVLL) form a helical membrane-spanning segment. The Extracellular portion of the chain corresponds to 61-412 (DSPIDPEPLS…RAPYLCRLRL (352 aa)). N159 carries an N-linked (GlcNAc...) asparagine glycan.

Belongs to the strictosidine synthase family.

The protein localises to the membrane. Exhibits strong arylesterase activity with beta-naphthyl acetate and phenyl acetate. May play a role in adipocyte differentiation. This is Adipocyte plasma membrane-associated protein (APMAP) from Bos taurus (Bovine).